The primary structure comprises 356 residues: Protein-glutamate methylesterase/protein-glutamine glutaminase 2 (356 aa).

Residues 4–121 form the Response regulatory domain; that stretch reads RALVVDDSAL…SQSMPEMAEE (118 aa). Aspartate 55 carries the 4-aspartylphosphate modification. The region spanning 161 to 356 is the CheB-type methylesterase domain; the sequence is KAAPRNILAI…MAEEIIRIIG (196 aa). Catalysis depends on residues serine 173, histidine 200, and aspartate 300.

It belongs to the CheB family. Phosphorylated by CheA. Phosphorylation of the N-terminal regulatory domain activates the methylesterase activity.

It localises to the cytoplasm. It catalyses the reaction [protein]-L-glutamate 5-O-methyl ester + H2O = L-glutamyl-[protein] + methanol + H(+). The enzyme catalyses L-glutaminyl-[protein] + H2O = L-glutamyl-[protein] + NH4(+). Functionally, involved in chemotaxis. Part of a chemotaxis signal transduction system that modulates chemotaxis in response to various stimuli. Catalyzes the demethylation of specific methylglutamate residues introduced into the chemoreceptors (methyl-accepting chemotaxis proteins or MCP) by CheR. Also mediates the irreversible deamidation of specific glutamine residues to glutamic acid. In Methanosarcina acetivorans (strain ATCC 35395 / DSM 2834 / JCM 12185 / C2A), this protein is Protein-glutamate methylesterase/protein-glutamine glutaminase 2.